Consider the following 822-residue polypeptide: Ras GTPase-activating-like protein rgaA (822 aa).

The disordered stretch occupies residues 1-36 (MNKEEYSDISDSESEEVHETNNHNEHEHEEEDDTPE). Residues 15-27 (EEVHETNNHNEHE) show a composition bias toward basic and acidic residues. Residues 104-152 (EDKESDWIAEIQELKRNLVSEVRRNHTLERDLNRLDKRIALLIKNRGNI) adopt a coiled-coil conformation. Positions 161–822 (GLKAPKHKGD…IHLLNKLFLY (662 aa)) are required for interaction to rac1A. One can recognise a Ras-GAP domain in the interval 234-477 (FLLLSLYRLS…GDIKNYLQEI (244 aa)).

In terms of assembly, heterotetramer. Quaternary complex with activated rac1A, ctxA and ctxB. Interacts directly with rac1A and ctxA. Preferentially interacts with activated forms of rac1A, rac1B and rac1C. Interacts with racE.

Its subcellular location is the cytoplasm. The protein localises to the cell cortex. It localises to the cleavage furrow. In terms of biological role, part of signaling pathway that is required for completion of cytokinesis. gapA and rgaA control cortexillin localization to the cleavage furrow and hence may be involved in cleavage of the midbody in the final stage of cytokinesis by regulating the actin cytoskeleton. Forms a complex by linking activated rac1A to ctxA. Assembly of this complex is necessary for the recruitment of cortexillin to the midzone of a dividing cell. Overexpression leads to the suppression of the formation of cellular projections containing F-actin and to a defect in cytokinesis. The protein is Ras GTPase-activating-like protein rgaA (rgaA) of Dictyostelium discoideum (Social amoeba).